The sequence spans 120 residues: Aspartate 1-decarboxylase (120 aa).

Residue Ser25 is the Schiff-base intermediate with substrate; via pyruvic acid of the active site. Ser25 carries the pyruvic acid (Ser) modification. Thr57 is a binding site for substrate. The Proton donor role is filled by Tyr58. Residue 73 to 75 participates in substrate binding; the sequence is GAA.

The protein belongs to the PanD family. As to quaternary structure, heterooctamer of four alpha and four beta subunits. It depends on pyruvate as a cofactor. In terms of processing, is synthesized initially as an inactive proenzyme, which is activated by self-cleavage at a specific serine bond to produce a beta-subunit with a hydroxyl group at its C-terminus and an alpha-subunit with a pyruvoyl group at its N-terminus.

Its subcellular location is the cytoplasm. It carries out the reaction L-aspartate + H(+) = beta-alanine + CO2. It participates in cofactor biosynthesis; (R)-pantothenate biosynthesis; beta-alanine from L-aspartate: step 1/1. Its function is as follows. Catalyzes the pyruvoyl-dependent decarboxylation of aspartate to produce beta-alanine. The protein is Aspartate 1-decarboxylase of Cupriavidus necator (strain ATCC 17699 / DSM 428 / KCTC 22496 / NCIMB 10442 / H16 / Stanier 337) (Ralstonia eutropha).